We begin with the raw amino-acid sequence, 33 residues long: Photosystem II reaction center protein Psb30 (33 aa).

Residues 5 to 25 (VVVQLGSLSLIVLAGPIIVLL) form a helical membrane-spanning segment.

It belongs to the Psb30/Ycf12 family. PSII is composed of 1 copy each of membrane proteins PsbA, PsbB, PsbC, PsbD, PsbE, PsbF, PsbH, PsbI, PsbJ, PsbK, PsbL, PsbM, PsbT, PsbX, PsbY, PsbZ, Psb30/Ycf12, peripheral proteins of the oxygen-evolving complex and a large number of cofactors. It forms dimeric complexes.

It localises to the plastid. It is found in the chloroplast thylakoid membrane. A core subunit of photosystem II (PSII), probably helps stabilize the reaction center. The polypeptide is Photosystem II reaction center protein Psb30 (Mesostigma viride (Green alga)).